A 902-amino-acid polypeptide reads, in one-letter code: 26S proteasome regulatory subunit rpn-1 (902 aa).

Residues 1–41 (MAQESDLSKTADKGKGKAVDDEKKHQDVDGKTPANGKKEEE) show a composition bias toward basic and acidic residues. The disordered stretch occupies residues 1 to 54 (MAQESDLSKTADKGKGKAVDDEKKHQDVDGKTPANGKKEEEQNASEELSEEDQQ). Residues 42 to 52 (QNASEELSEED) are compositionally biased toward acidic residues. PC repeat units lie at residues 415–448 (STVA…QIQA), 449–487 (GAYL…LIRV), 488–522 (ATIM…SMQV), 525–559 (MAAL…GSRL), 568–601 (ALGL…KPTA), 645–680 (AVLG…NIRR), 681–715 (AVPL…EVAI), and 716–750 (NAIF…DQES).

It belongs to the proteasome subunit S2 family.

Its function is as follows. Acts as a regulatory subunit of the 26 proteasome which is involved in the ATP-dependent degradation of ubiquitinated proteins. This is 26S proteasome regulatory subunit rpn-1 (rpn-1) from Neurospora crassa (strain ATCC 24698 / 74-OR23-1A / CBS 708.71 / DSM 1257 / FGSC 987).